The chain runs to 235 residues: MGLTSRPTPASRQPASPPPADPVLLPEPKRLGVLSRLAPEPMKVVLNWGRRYSLWVFNFGLACCAIEFIAASMARHDFIRLGVIPFAPGPRQADLMIVSGTVTDKMAPAVKRLYEQMPEPKYVISFGACSNCGGPYWDSYSVTKGVDQIIPVDVYVPGCPPRPEALLQGILKLQEKIARESLAERYATGATGGGPSTDALRSGLVAAPTAPGPTAPASTAPGPTAPAPTQDEERR.

Residues 1–14 (MGLTSRPTPASRQP) show a composition bias toward low complexity. Residues 1-24 (MGLTSRPTPASRQPASPPPADPVL) are disordered. [4Fe-4S] cluster contacts are provided by Cys63, Cys64, Cys129, and Cys159. Positions 188-235 (TGATGGGPSTDALRSGLVAAPTAPGPTAPASTAPGPTAPAPTQDEERR) are disordered.

It belongs to the complex I 20 kDa subunit family. NDH-1 is composed of 14 different subunits. Subunits NuoB, C, D, E, F, and G constitute the peripheral sector of the complex. It depends on [4Fe-4S] cluster as a cofactor.

The protein resides in the cell membrane. It catalyses the reaction a quinone + NADH + 5 H(+)(in) = a quinol + NAD(+) + 4 H(+)(out). Functionally, NDH-1 shuttles electrons from NADH, via FMN and iron-sulfur (Fe-S) centers, to quinones in the respiratory chain. The immediate electron acceptor for the enzyme in this species is believed to be a menaquinone. Couples the redox reaction to proton translocation (for every two electrons transferred, four hydrogen ions are translocated across the cytoplasmic membrane), and thus conserves the redox energy in a proton gradient. This chain is NADH-quinone oxidoreductase subunit B 2, found in Streptomyces griseus subsp. griseus (strain JCM 4626 / CBS 651.72 / NBRC 13350 / KCC S-0626 / ISP 5235).